The following is a 610-amino-acid chain: Glutamine--fructose-6-phosphate aminotransferase [isomerizing] (610 aa).

Residue Cys-2 is the Nucleophile; for GATase activity of the active site. Residues 2–218 (CGIVGAVAQR…EGDVAEITRR (217 aa)) form the Glutamine amidotransferase type-2 domain. 2 consecutive SIS domains span residues 286-426 (AAEI…QQGR) and 459-600 (LATD…VDQP). Catalysis depends on Lys-605, which acts as the For Fru-6P isomerization activity.

In terms of assembly, homodimer.

Its subcellular location is the cytoplasm. It carries out the reaction D-fructose 6-phosphate + L-glutamine = D-glucosamine 6-phosphate + L-glutamate. Functionally, catalyzes the first step in hexosamine metabolism, converting fructose-6P into glucosamine-6P using glutamine as a nitrogen source. This Vibrio vulnificus (strain CMCP6) protein is Glutamine--fructose-6-phosphate aminotransferase [isomerizing].